Here is a 505-residue protein sequence, read N- to C-terminus: Probable ribonuclease FAU-1 (505 aa).

Residues isoleucine 389–aspartate 408 are disordered.

This sequence belongs to the FAU-1 family.

In terms of biological role, probable RNase involved in rRNA stability through maturation and/or degradation of precursor rRNAs. Binds to RNA in loop regions with AU-rich sequences. This is Probable ribonuclease FAU-1 from Haloquadratum walsbyi (strain DSM 16790 / HBSQ001).